Reading from the N-terminus, the 294-residue chain is Cell division protein ZipA (294 aa).

A topological domain (periplasmic) is located at residue Met-1. A helical membrane pass occupies residues 2–22 (EIGLREWLILIGIIVIAGILF). The Cytoplasmic segment spans residues 23 to 294 (DGWRRMRGGK…FERRALTQKR (272 aa)). Disordered regions lie at residues 64-111 (THKE…GDLN) and 126-146 (KDDFVADNNRHGAAATPSTPV). A compositionally biased stretch (basic and acidic residues) spans 82–91 (ARERERDPKP).

It belongs to the ZipA family. Interacts with FtsZ via their C-terminal domains.

The protein localises to the cell inner membrane. Its function is as follows. Essential cell division protein that stabilizes the FtsZ protofilaments by cross-linking them and that serves as a cytoplasmic membrane anchor for the Z ring. Also required for the recruitment to the septal ring of downstream cell division proteins. This chain is Cell division protein ZipA, found in Pseudomonas entomophila (strain L48).